A 168-amino-acid chain; its full sequence is Sec-independent protein translocase protein TatB (168 aa).

The chain crosses the membrane as a helical span at residues 1-21 (MIDLGISKLALIGAVALIVIG).

This sequence belongs to the TatB family. As to quaternary structure, the Tat system comprises two distinct complexes: a TatABC complex, containing multiple copies of TatA, TatB and TatC subunits, and a separate TatA complex, containing only TatA subunits. Substrates initially bind to the TatABC complex, which probably triggers association of the separate TatA complex to form the active translocon.

It localises to the cell inner membrane. Functionally, part of the twin-arginine translocation (Tat) system that transports large folded proteins containing a characteristic twin-arginine motif in their signal peptide across membranes. Together with TatC, TatB is part of a receptor directly interacting with Tat signal peptides. TatB may form an oligomeric binding site that transiently accommodates folded Tat precursor proteins before their translocation. In Cupriavidus pinatubonensis (strain JMP 134 / LMG 1197) (Cupriavidus necator (strain JMP 134)), this protein is Sec-independent protein translocase protein TatB.